The chain runs to 337 residues: Calcium-binding protein 39-like (337 aa).

Belongs to the Mo25 family. Component of a trimeric complex composed of STK11/LKB1, STRAD (STRADA or STRADB) and CAB39/MO25 (CAB39/MO25alpha or CAB39L/MO25beta): the complex tethers STK11/LKB1 in the cytoplasm and stimulates its catalytic activity.

In terms of biological role, component of a complex that binds and activates STK11/LKB1. In the complex, required to stabilize the interaction between CAB39/MO25 (CAB39/MO25alpha or CAB39L/MO25beta) and STK11/LKB1. This is Calcium-binding protein 39-like (CAB39L) from Homo sapiens (Human).